We begin with the raw amino-acid sequence, 269 residues long: MAQRSRVTLPQLQAMKERGERITMVTAYDYPSSLLADRAGMDMILVGDSLGMVVLGYSSTVPVTMDEMIHHTKAVVRANPAALVVADLPFLSYQTSVPDAVYNAGRLIKEGGADAVKLEGGQAVVPTVRAIVNAGIPVMGHLGLTPQSAVQLGGFRVQGRSEAEGEKIAADAAALVEAGVFALVLECVPADLARRITAALPVPTIGIGAGPDCDGQVLVYHDLLGLFDRFRPKFVKQYANLAEATVAALEKYRDEVRQGKFPDQEHSFK.

The Mg(2+) site is built by Asp-48 and Asp-87. 3-methyl-2-oxobutanoate contacts are provided by residues 48–49 (DS), Asp-87, and Lys-117. Glu-119 lines the Mg(2+) pocket. Glu-186 acts as the Proton acceptor in catalysis.

It belongs to the PanB family. In terms of assembly, homodecamer; pentamer of dimers. Mg(2+) serves as cofactor.

The protein resides in the cytoplasm. The catalysed reaction is 3-methyl-2-oxobutanoate + (6R)-5,10-methylene-5,6,7,8-tetrahydrofolate + H2O = 2-dehydropantoate + (6S)-5,6,7,8-tetrahydrofolate. Its pathway is cofactor biosynthesis; (R)-pantothenate biosynthesis; (R)-pantoate from 3-methyl-2-oxobutanoate: step 1/2. Its function is as follows. Catalyzes the reversible reaction in which hydroxymethyl group from 5,10-methylenetetrahydrofolate is transferred onto alpha-ketoisovalerate to form ketopantoate. This Moorella thermoacetica (strain ATCC 39073 / JCM 9320) protein is 3-methyl-2-oxobutanoate hydroxymethyltransferase.